The primary structure comprises 243 residues: 1-(5-phosphoribosyl)-5-[(5-phosphoribosylamino)methylideneamino] imidazole-4-carboxamide isomerase (243 aa).

Catalysis depends on Asp8, which acts as the Proton acceptor. The active-site Proton donor is the Asp129.

Belongs to the HisA/HisF family.

It localises to the cytoplasm. It catalyses the reaction 1-(5-phospho-beta-D-ribosyl)-5-[(5-phospho-beta-D-ribosylamino)methylideneamino]imidazole-4-carboxamide = 5-[(5-phospho-1-deoxy-D-ribulos-1-ylimino)methylamino]-1-(5-phospho-beta-D-ribosyl)imidazole-4-carboxamide. The protein operates within amino-acid biosynthesis; L-histidine biosynthesis; L-histidine from 5-phospho-alpha-D-ribose 1-diphosphate: step 4/9. The sequence is that of 1-(5-phosphoribosyl)-5-[(5-phosphoribosylamino)methylideneamino] imidazole-4-carboxamide isomerase from Citrifermentans bemidjiense (strain ATCC BAA-1014 / DSM 16622 / JCM 12645 / Bem) (Geobacter bemidjiensis).